Here is a 128-residue protein sequence, read N- to C-terminus: Large ribosomal subunit protein bL17 (128 aa).

The protein belongs to the bacterial ribosomal protein bL17 family. As to quaternary structure, part of the 50S ribosomal subunit. Contacts protein L32.

The polypeptide is Large ribosomal subunit protein bL17 (Pseudomonas savastanoi pv. phaseolicola (strain 1448A / Race 6) (Pseudomonas syringae pv. phaseolicola (strain 1448A / Race 6))).